The primary structure comprises 183 residues: Ribosome maturation factor RimM (183 aa).

One can recognise a PRC barrel domain in the interval 96 to 171 (PDEFYDHELE…VALIDPPEGL (76 aa)).

The protein belongs to the RimM family. Binds ribosomal protein uS19.

It localises to the cytoplasm. Its function is as follows. An accessory protein needed during the final step in the assembly of 30S ribosomal subunit, possibly for assembly of the head region. Essential for efficient processing of 16S rRNA. May be needed both before and after RbfA during the maturation of 16S rRNA. It has affinity for free ribosomal 30S subunits but not for 70S ribosomes. This is Ribosome maturation factor RimM from Rhodococcus jostii (strain RHA1).